Reading from the N-terminus, the 72-residue chain is Translation initiation factor IF-1 1 (72 aa).

Residues 1-72 (MSKEDVIQMQ…TKGRIVFRAK (72 aa)) form the S1-like domain.

This sequence belongs to the IF-1 family. Component of the 30S ribosomal translation pre-initiation complex which assembles on the 30S ribosome in the order IF-2 and IF-3, IF-1 and N-formylmethionyl-tRNA(fMet); mRNA recruitment can occur at any time during PIC assembly.

The protein localises to the cytoplasm. In terms of biological role, one of the essential components for the initiation of protein synthesis. Stabilizes the binding of IF-2 and IF-3 on the 30S subunit to which N-formylmethionyl-tRNA(fMet) subsequently binds. Helps modulate mRNA selection, yielding the 30S pre-initiation complex (PIC). Upon addition of the 50S ribosomal subunit IF-1, IF-2 and IF-3 are released leaving the mature 70S translation initiation complex. This is Translation initiation factor IF-1 1 from Thiobacillus denitrificans (strain ATCC 25259 / T1).